A 170-amino-acid chain; its full sequence is Acireductone dioxygenase (170 aa).

Residues His-99, His-101, Glu-105, and His-144 each coordinate Fe(2+). Ni(2+) is bound by residues His-99, His-101, Glu-105, and His-144.

The protein belongs to the acireductone dioxygenase (ARD) family. As to quaternary structure, monomer. Fe(2+) is required as a cofactor. Requires Ni(2+) as cofactor.

The catalysed reaction is 1,2-dihydroxy-5-(methylsulfanyl)pent-1-en-3-one + O2 = 3-(methylsulfanyl)propanoate + CO + formate + 2 H(+). It carries out the reaction 1,2-dihydroxy-5-(methylsulfanyl)pent-1-en-3-one + O2 = 4-methylsulfanyl-2-oxobutanoate + formate + 2 H(+). Its pathway is amino-acid biosynthesis; L-methionine biosynthesis via salvage pathway; L-methionine from S-methyl-5-thio-alpha-D-ribose 1-phosphate: step 5/6. In terms of biological role, catalyzes 2 different reactions between oxygen and the acireductone 1,2-dihydroxy-3-keto-5-methylthiopentene (DHK-MTPene) depending upon the metal bound in the active site. Fe-containing acireductone dioxygenase (Fe-ARD) produces formate and 2-keto-4-methylthiobutyrate (KMTB), the alpha-ketoacid precursor of methionine in the methionine recycle pathway. Ni-containing acireductone dioxygenase (Ni-ARD) produces methylthiopropionate, carbon monoxide and formate, and does not lie on the methionine recycle pathway. The polypeptide is Acireductone dioxygenase (Bacillus cereus (strain ATCC 10987 / NRS 248)).